Consider the following 396-residue polypeptide: Putative cystathionine beta-lyase (396 aa).

Lysine 210 is modified (N6-(pyridoxal phosphate)lysine).

This sequence belongs to the trans-sulfuration enzymes family. It depends on pyridoxal 5'-phosphate as a cofactor.

It carries out the reaction L,L-cystathionine + H2O = L-homocysteine + pyruvate + NH4(+). The catalysed reaction is an S-substituted L-cysteine + H2O = a thiol + pyruvate + NH4(+). The protein operates within amino-acid biosynthesis; L-methionine biosynthesis via de novo pathway; L-homocysteine from L-cystathionine: step 1/1. Catalyzes the cleavage of cystathionine to homocysteine, pyruvate and ammonia during methionine biosynthesis. This chain is Putative cystathionine beta-lyase (metC), found in Rhizobium johnstonii (strain DSM 114642 / LMG 32736 / 3841) (Rhizobium leguminosarum bv. viciae).